We begin with the raw amino-acid sequence, 284 residues long: Bifunctional protein FolD (284 aa).

NADP(+)-binding positions include 164–166 (GRS) and Ser-189.

Belongs to the tetrahydrofolate dehydrogenase/cyclohydrolase family. As to quaternary structure, homodimer.

The enzyme catalyses (6R)-5,10-methylene-5,6,7,8-tetrahydrofolate + NADP(+) = (6R)-5,10-methenyltetrahydrofolate + NADPH. It carries out the reaction (6R)-5,10-methenyltetrahydrofolate + H2O = (6R)-10-formyltetrahydrofolate + H(+). It functions in the pathway one-carbon metabolism; tetrahydrofolate interconversion. Its function is as follows. Catalyzes the oxidation of 5,10-methylenetetrahydrofolate to 5,10-methenyltetrahydrofolate and then the hydrolysis of 5,10-methenyltetrahydrofolate to 10-formyltetrahydrofolate. This chain is Bifunctional protein FolD, found in Listeria monocytogenes serotype 4a (strain HCC23).